The chain runs to 259 residues: Sesquipedalian-2 (259 aa).

Residues 17 to 121 (PADHMGFLRT…WVKVLSRASF (105 aa)) form the PH domain. A coiled-coil region spans residues 124 to 149 (MRLVVRELESQLQDARQSLALQRRSS). The F&amp;H motif lies at 223–235 (CFSTLHDWYGQEI).

The protein belongs to the sesquipedalian family. In terms of assembly, forms homodimers and heterodimers with PHETA1. Interacts with OCRL and INPP5B.

It localises to the early endosome. The protein resides in the recycling endosome. It is found in the golgi apparatus. The protein localises to the trans-Golgi network. Its subcellular location is the cytoplasmic vesicle. It localises to the clathrin-coated vesicle. Plays a role in endocytic trafficking. Required for receptor recycling from endosomes, both to the trans-Golgi network and the plasma membrane. The polypeptide is Sesquipedalian-2 (Homo sapiens (Human)).